The sequence spans 351 residues: tRNA N6-adenosine threonylcarbamoyltransferase (351 aa).

Fe cation-binding residues include H111 and H115. Residues 134-138 (LVSGG), D167, G180, and N276 contribute to the substrate site. Residue D304 participates in Fe cation binding.

This sequence belongs to the KAE1 / TsaD family. Requires Fe(2+) as cofactor.

It localises to the cytoplasm. The enzyme catalyses L-threonylcarbamoyladenylate + adenosine(37) in tRNA = N(6)-L-threonylcarbamoyladenosine(37) in tRNA + AMP + H(+). Required for the formation of a threonylcarbamoyl group on adenosine at position 37 (t(6)A37) in tRNAs that read codons beginning with adenine. Is involved in the transfer of the threonylcarbamoyl moiety of threonylcarbamoyl-AMP (TC-AMP) to the N6 group of A37, together with TsaE and TsaB. TsaD likely plays a direct catalytic role in this reaction. The chain is tRNA N6-adenosine threonylcarbamoyltransferase from Marinobacter nauticus (strain ATCC 700491 / DSM 11845 / VT8) (Marinobacter aquaeolei).